Consider the following 158-residue polypeptide: Transcription elongation factor GreA (158 aa).

Residues 2–70 are a coiled coil; that stretch reads ENQKQYPMTQ…IEQDIQRIEH (69 aa).

It belongs to the GreA/GreB family.

Its function is as follows. Necessary for efficient RNA polymerase transcription elongation past template-encoded arresting sites. The arresting sites in DNA have the property of trapping a certain fraction of elongating RNA polymerases that pass through, resulting in locked ternary complexes. Cleavage of the nascent transcript by cleavage factors such as GreA or GreB allows the resumption of elongation from the new 3'terminus. GreA releases sequences of 2 to 3 nucleotides. In Staphylococcus epidermidis (strain ATCC 35984 / DSM 28319 / BCRC 17069 / CCUG 31568 / BM 3577 / RP62A), this protein is Transcription elongation factor GreA.